Reading from the N-terminus, the 498-residue chain is Probable cytosol aminopeptidase (498 aa).

Mn(2+) is bound by residues Lys-262 and Asp-267. Residue Lys-274 is part of the active site. Mn(2+)-binding residues include Asp-285, Asp-344, and Glu-346. Residue Arg-348 is part of the active site.

This sequence belongs to the peptidase M17 family. Requires Mn(2+) as cofactor.

The protein localises to the cytoplasm. The enzyme catalyses Release of an N-terminal amino acid, Xaa-|-Yaa-, in which Xaa is preferably Leu, but may be other amino acids including Pro although not Arg or Lys, and Yaa may be Pro. Amino acid amides and methyl esters are also readily hydrolyzed, but rates on arylamides are exceedingly low.. It carries out the reaction Release of an N-terminal amino acid, preferentially leucine, but not glutamic or aspartic acids.. Presumably involved in the processing and regular turnover of intracellular proteins. Catalyzes the removal of unsubstituted N-terminal amino acids from various peptides. The protein is Probable cytosol aminopeptidase of Phytoplasma mali (strain AT).